Consider the following 948-residue polypeptide: Autophagy-related protein 9 (948 aa).

Disordered regions lie at residues methionine 1–tyrosine 20, glutamine 46–methionine 104, and histidine 130–histidine 193. Topologically, residues methionine 1 to glycine 230 are cytoplasmic. The segment covering glutamate 66–arginine 79 has biased composition (polar residues). The span at threonine 163–valine 172 shows a compositional bias: basic and acidic residues. A helical transmembrane segment spans residues isoleucine 231–phenylalanine 251. The Lumenal portion of the chain corresponds to serine 252–threonine 287. Residues phenylalanine 288–isoleucine 308 traverse the membrane as a helical segment. Over arginine 309–arginine 454 the chain is Cytoplasmic. The stretch at phenylalanine 455–methionine 475 is an intramembrane region. The Cytoplasmic segment spans residues histidine 476–arginine 543. A helical transmembrane segment spans residues phenylalanine 544–proline 564. Residues glutamate 565–arginine 576 are Lumenal-facing. Residues threonine 577–proline 597 form a helical membrane-spanning segment. Over glutamate 598–lysine 643 the chain is Cytoplasmic. The stretch at isoleucine 644–serine 664 is an intramembrane region. Over leucine 665–isoleucine 948 the chain is Cytoplasmic. Positions threonine 762–glycine 923 are disordered. Residues glutamine 844–histidine 853 show a composition bias toward basic residues. The segment covering serine 878 to serine 892 has biased composition (low complexity). Acidic residues predominate over residues asparagine 907–asparagine 917.

It belongs to the ATG9 family. As to quaternary structure, homotrimer; forms a homotrimer with a central pore that forms a path between the two membrane leaflets. Phosphorylated by atg1. Atg1 phosphorylation is required for preautophagosome elongation.

It is found in the preautophagosomal structure membrane. The protein resides in the cytoplasmic vesicle membrane. Its subcellular location is the golgi apparatus membrane. The protein localises to the endoplasmic reticulum membrane. The enzyme catalyses a 1,2-diacyl-sn-glycero-3-phosphocholine(in) = a 1,2-diacyl-sn-glycero-3-phosphocholine(out). The catalysed reaction is a 1,2-diacyl-sn-glycero-3-phospho-L-serine(in) = a 1,2-diacyl-sn-glycero-3-phospho-L-serine(out). It carries out the reaction a 1,2-diacyl-sn-glycero-3-phosphoethanolamine(in) = a 1,2-diacyl-sn-glycero-3-phosphoethanolamine(out). It catalyses the reaction a 1,2-diacyl-sn-glycero-3-phospho-(1D-myo-inositol-3-phosphate)(in) = a 1,2-diacyl-sn-glycero-3-phospho-(1D-myo-inositol-3-phosphate)(out). Functionally, phospholipid scramblase involved in autophagy and cytoplasm to vacuole transport (Cvt) vesicle formation. Cycles between the preautophagosomal structure/phagophore assembly site (PAS) and the cytoplasmic vesicle pool and supplies membrane for the growing autophagosome. Lipid scramblase activity plays a key role in preautophagosomal structure/phagophore assembly by distributing the phospholipids that arrive through atg2 from the cytoplasmic to the luminal leaflet of the bilayer, thereby driving autophagosomal membrane expansion. Required for mitophagy. Also involved in endoplasmic reticulum-specific autophagic process and is essential for the survival of cells subjected to severe ER stress. Different machineries are required for anterograde trafficking to the PAS during either the Cvt pathway or bulk autophagy and for retrograde trafficking. This chain is Autophagy-related protein 9 (atg9), found in Penicillium rubens (strain ATCC 28089 / DSM 1075 / NRRL 1951 / Wisconsin 54-1255) (Penicillium chrysogenum).